A 126-amino-acid chain; its full sequence is Large ribosomal subunit protein bL12 (126 aa).

Belongs to the bacterial ribosomal protein bL12 family. Homodimer. Part of the ribosomal stalk of the 50S ribosomal subunit. Forms a multimeric L10(L12)X complex, where L10 forms an elongated spine to which 2 to 4 L12 dimers bind in a sequential fashion. Binds GTP-bound translation factors.

Forms part of the ribosomal stalk which helps the ribosome interact with GTP-bound translation factors. Is thus essential for accurate translation. This chain is Large ribosomal subunit protein bL12, found in Streptococcus pyogenes serotype M28 (strain MGAS6180).